Here is a 244-residue protein sequence, read N- to C-terminus: Carboxy-S-adenosyl-L-methionine synthase (244 aa).

Residues tyrosine 40, 65-67 (GCS), 90-91 (DN), 119-120 (DL), asparagine 134, and arginine 201 contribute to the S-adenosyl-L-methionine site.

Belongs to the class I-like SAM-binding methyltransferase superfamily. Cx-SAM synthase family. Homodimer.

It catalyses the reaction prephenate + S-adenosyl-L-methionine = carboxy-S-adenosyl-L-methionine + 3-phenylpyruvate + H2O. Catalyzes the conversion of S-adenosyl-L-methionine (SAM) to carboxy-S-adenosyl-L-methionine (Cx-SAM). The protein is Carboxy-S-adenosyl-L-methionine synthase of Trichlorobacter lovleyi (strain ATCC BAA-1151 / DSM 17278 / SZ) (Geobacter lovleyi).